Reading from the N-terminus, the 377-residue chain is Leucine aminopeptidase A (377 aa).

The first 18 residues, 1–18, serve as a signal peptide directing secretion; the sequence is MRFLPCIATLAATASALA. A propeptide spanning residues 19–79 is cleaved from the precursor; that stretch reads IGDHVRSDDQ…SNKKQKLAVT (61 aa). Asparagine 87 carries an N-linked (GlcNAc...) asparagine glycan. Positions 176, 195, 234, and 261 each coordinate Zn(2+). N-linked (GlcNAc...) asparagine glycosylation is present at asparagine 288. Cysteine 310 and cysteine 314 are joined by a disulfide. Position 343 (histidine 343) interacts with Zn(2+).

It belongs to the peptidase M28 family. M28E subfamily. In terms of assembly, monomer. Zn(2+) serves as cofactor.

Its subcellular location is the secreted. With respect to regulation, calcium, magnesium and manganese cations reduce peptidase activity to 20.3-51.3 percent. The metal ion chelating reagent EDTA almost completely inhibits activity. The protease inhibitor bacitracin and the aminopeptidase B inhibitor bestatin, as well as DTT and beta-mercaptoethanol act also as lap A inhibitorsD. In terms of biological role, extracellular aminopeptidase that allows assimilation of proteinaceous substrates. In Aspergillus oryzae (strain ATCC 42149 / RIB 40) (Yellow koji mold), this protein is Leucine aminopeptidase A (lapA).